A 388-amino-acid chain; its full sequence is NADH-quinone oxidoreductase subunit D 2 (388 aa).

The protein belongs to the complex I 49 kDa subunit family. In terms of assembly, NDH-1 is composed of 14 different subunits. Subunits NuoB, C, D, E, F, and G constitute the peripheral sector of the complex.

The protein localises to the cell inner membrane. It catalyses the reaction a quinone + NADH + 5 H(+)(in) = a quinol + NAD(+) + 4 H(+)(out). Its function is as follows. NDH-1 shuttles electrons from NADH, via FMN and iron-sulfur (Fe-S) centers, to quinones in the respiratory chain. The immediate electron acceptor for the enzyme in this species is believed to be ubiquinone. Couples the redox reaction to proton translocation (for every two electrons transferred, four hydrogen ions are translocated across the cytoplasmic membrane), and thus conserves the redox energy in a proton gradient. This Sorangium cellulosum (strain So ce56) (Polyangium cellulosum (strain So ce56)) protein is NADH-quinone oxidoreductase subunit D 2.